The chain runs to 230 residues: Orotidine 5'-phosphate decarboxylase (230 aa).

Substrate-binding positions include Asp-11, Lys-34, 61–70 (DLKLHDIPNT), Thr-117, Arg-179, Gln-188, Gly-208, and Arg-209. Catalysis depends on Lys-63, which acts as the Proton donor.

It belongs to the OMP decarboxylase family. Type 1 subfamily. Homodimer.

It carries out the reaction orotidine 5'-phosphate + H(+) = UMP + CO2. It participates in pyrimidine metabolism; UMP biosynthesis via de novo pathway; UMP from orotate: step 2/2. Catalyzes the decarboxylation of orotidine 5'-monophosphate (OMP) to uridine 5'-monophosphate (UMP). The chain is Orotidine 5'-phosphate decarboxylase from Streptococcus mutans serotype c (strain ATCC 700610 / UA159).